The chain runs to 509 residues: Cardiolipin synthase 1 (509 aa).

Transmembrane regions (helical) follow at residues 4-24 (PIVQ…LLNT), 30-50 (YTFV…VIFI), and 59-79 (LAWF…YAIF). PLD phosphodiesterase domains are found at residues 238-265 (VNYR…GDEY) and 422-449 (KDGF…DVRS). Active-site residues include H243, K245, D250, H427, K429, and D434.

This sequence belongs to the phospholipase D family. Cardiolipin synthase subfamily.

It is found in the cell membrane. The catalysed reaction is 2 a 1,2-diacyl-sn-glycero-3-phospho-(1'-sn-glycerol) = a cardiolipin + glycerol. Functionally, catalyzes the reversible phosphatidyl group transfer from one phosphatidylglycerol molecule to another to form cardiolipin (CL) (diphosphatidylglycerol) and glycerol. The polypeptide is Cardiolipin synthase 1 (cls1) (Bacillus cereus (strain ATCC 14579 / DSM 31 / CCUG 7414 / JCM 2152 / NBRC 15305 / NCIMB 9373 / NCTC 2599 / NRRL B-3711)).